Reading from the N-terminus, the 407-residue chain is MAPRRRRGAGQDGSDDGRSDSDAPKNRPPNTAFRQQRMRAWQCVLTPKLIVTVFSILAAIYLGFGAWLTYLAHTVRDLKIDYTDCLTSAPKDDFETIPQNHITAHFSAKDSTFDPYKAQWKTTEREVQVANYTDNRQFCIVRFNIPEDLQPTISFFYYLENFYQNHRRYVNSFNAKQLLGDAVDGKTINDSTCDPITHDPKGTGKIVYPCGLVANSIFNDTFSSPLALAVRNSSDSSRPYNMTTKGIAWPGLKDLYGKTSYSLDQIVPPPNWERRYKYGYQENNPPPDLKTDELFQNWMMLAAAPNFYKLYQKNDTHPMLAGQYEIEIESNFDVTVYKGRKAFVITTLSTMGSRNIWPGIIFLIVGGICLVLDIYFILSFFIWRPRKLGDPSYLSWNQPSAPGGHSS.

The tract at residues 1–33 is disordered; that stretch reads MAPRRRRGAGQDGSDDGRSDSDAPKNRPPNTAF. Residues 1-48 lie on the Cytoplasmic side of the membrane; that stretch reads MAPRRRRGAGQDGSDDGRSDSDAPKNRPPNTAFRQQRMRAWQCVLTPK. Basic and acidic residues predominate over residues 15-25; sequence DDGRSDSDAPK. A helical membrane pass occupies residues 49–69; the sequence is LIVTVFSILAAIYLGFGAWLT. Over 70 to 359 the chain is Extracellular; sequence YLAHTVRDLK…TMGSRNIWPG (290 aa). Cys85 and Cys139 are oxidised to a cystine. N-linked (GlcNAc...) asparagine glycans are attached at residues Asn131 and Asn189. Cysteines 193 and 210 form a disulfide. N-linked (GlcNAc...) asparagine glycosylation is found at Asn219, Asn232, Asn241, and Asn314. The helical transmembrane segment at 360–380 threads the bilayer; sequence IIFLIVGGICLVLDIYFILSF. At 381–407 the chain is on the cytoplasmic side; sequence FIWRPRKLGDPSYLSWNQPSAPGGHSS.

It belongs to the CDC50/LEM3 family. Component of a flippase complex consisting of DNF1 and CDC50. Interacts with DNF1; the interaction is direct.

It is found in the cell membrane. Functionally, accessory component of a P4-ATPase flippase complex which catalyzes the hydrolysis of ATP coupled to the transport of phosphatidylcholine and phosphatidylserine from the lumen to the cytosolic leaflet of membranes and ensures the maintenance of asymmetric distribution of phospholipids. In Chaetomium thermophilum (strain DSM 1495 / CBS 144.50 / IMI 039719) (Thermochaetoides thermophila), this protein is Phospholipid-transporting ATPase accessory subunit CDC50.